The chain runs to 353 residues: Protein RecA (353 aa).

67–74 (GPESSGKT) is an ATP binding site. Residues 330 to 353 (SNPNSTPDFSVDDSEGVAETNEDF) are disordered. The span at 339–353 (SVDDSEGVAETNEDF) shows a compositional bias: acidic residues.

It belongs to the RecA family.

The protein resides in the cytoplasm. Functionally, can catalyze the hydrolysis of ATP in the presence of single-stranded DNA, the ATP-dependent uptake of single-stranded DNA by duplex DNA, and the ATP-dependent hybridization of homologous single-stranded DNAs. It interacts with LexA causing its activation and leading to its autocatalytic cleavage. This chain is Protein RecA, found in Escherichia coli O157:H7 (strain EC4115 / EHEC).